The primary structure comprises 124 residues: Small ribosomal subunit protein uS12 (124 aa).

3-methylthioaspartic acid is present on Asp89. The disordered stretch occupies residues Gln105–Lys124.

It belongs to the universal ribosomal protein uS12 family. Part of the 30S ribosomal subunit. Contacts proteins S8 and S17. May interact with IF1 in the 30S initiation complex.

In terms of biological role, with S4 and S5 plays an important role in translational accuracy. Functionally, interacts with and stabilizes bases of the 16S rRNA that are involved in tRNA selection in the A site and with the mRNA backbone. Located at the interface of the 30S and 50S subunits, it traverses the body of the 30S subunit contacting proteins on the other side and probably holding the rRNA structure together. The combined cluster of proteins S8, S12 and S17 appears to hold together the shoulder and platform of the 30S subunit. The protein is Small ribosomal subunit protein uS12 of Renibacterium salmoninarum (strain ATCC 33209 / DSM 20767 / JCM 11484 / NBRC 15589 / NCIMB 2235).